The chain runs to 351 residues: Cobalt-precorrin-5B C(1)-methyltransferase (351 aa).

It belongs to the CbiD family.

The catalysed reaction is Co-precorrin-5B + S-adenosyl-L-methionine = Co-precorrin-6A + S-adenosyl-L-homocysteine. It participates in cofactor biosynthesis; adenosylcobalamin biosynthesis; cob(II)yrinate a,c-diamide from sirohydrochlorin (anaerobic route): step 6/10. In terms of biological role, catalyzes the methylation of C-1 in cobalt-precorrin-5B to form cobalt-precorrin-6A. The chain is Cobalt-precorrin-5B C(1)-methyltransferase from Thermosipho africanus (strain TCF52B).